The following is a 317-amino-acid chain: Acetyl-coenzyme A carboxylase carboxyl transferase subunit alpha (317 aa).

A CoA carboxyltransferase C-terminal domain is found at 33–294; the sequence is NLDDEITRLQ…KKRLLADLAD (262 aa).

The protein belongs to the AccA family. In terms of assembly, acetyl-CoA carboxylase is a heterohexamer composed of biotin carboxyl carrier protein (AccB), biotin carboxylase (AccC) and two subunits each of ACCase subunit alpha (AccA) and ACCase subunit beta (AccD).

It localises to the cytoplasm. The enzyme catalyses N(6)-carboxybiotinyl-L-lysyl-[protein] + acetyl-CoA = N(6)-biotinyl-L-lysyl-[protein] + malonyl-CoA. It participates in lipid metabolism; malonyl-CoA biosynthesis; malonyl-CoA from acetyl-CoA: step 1/1. Functionally, component of the acetyl coenzyme A carboxylase (ACC) complex. First, biotin carboxylase catalyzes the carboxylation of biotin on its carrier protein (BCCP) and then the CO(2) group is transferred by the carboxyltransferase to acetyl-CoA to form malonyl-CoA. The protein is Acetyl-coenzyme A carboxylase carboxyl transferase subunit alpha of Histophilus somni (strain 129Pt) (Haemophilus somnus).